The sequence spans 337 residues: MMSAMETNMVLILTIFYNAYFLLAISSQLLLLYLMLKCQNRSLHEMRIYLFNILGLQFISTFSAFVLQCRLKRVTLKHFCRIVPSSGTVAMLCYGPCKYLGNIVCEVLFHILQTSLIACATALIIAFYYRYEMLTNNSFTRSGHYKQLVISYCVPLVFLICEVLSPNDVNKLVAELTVLHPTYGLENYAILGFSDVKTVAASSQTLMLMIGLYGTPFIALVFRKKIIKILHSSRSYHAEKIVQTKSMIQGLTLQTLLPLICYCPGFTYYIYSQYTQSSSLFVEFAVSPYGFVYTIFDPLLTIYYVLPYRRTFKAIFSKHNSTTSATFVHSETARRVA.

The next 7 helical transmembrane spans lie at 10–30 (VLILTIFYNAYFLLAISSQLL), 48–68 (IYLFNILGLQFISTFSAFVLQ), 107–127 (VLFHILQTSLIACATALIIAF), 147–167 (QLVISYCVPLVFLICEVLSPN), 202–222 (SSQTLMLMIGLYGTPFIALVF), 250–270 (GLTLQTLLPLICYCPGFTYYI), and 280–300 (LFVEFAVSPYGFVYTIFDPLL).

This sequence belongs to the nematode receptor-like protein srd family.

The protein resides in the membrane. This is Serpentine receptor class delta-50 from Caenorhabditis elegans.